A 619-amino-acid polypeptide reads, in one-letter code: Coagulation factor X-activating enzyme heavy chain (619 aa).

The first 20 residues, methionine 1–serine 20, serve as a signal peptide directing secretion. Residues isoleucine 21–glutamine 188 constitute a propeptide that is removed on maturation. The 195-residue stretch at isoleucine 199–proline 393 folds into the Peptidase M12B domain. Cysteines 215 and 251 form a disulfide. N-linked (GlcNAc...) (complex) asparagine glycans are attached at residues asparagine 216 and asparagine 257. 3 disulfides stabilise this stretch: cysteine 308–cysteine 388, cysteine 348–cysteine 372, and cysteine 350–cysteine 355. Histidine 333 contributes to the Zn(2+) binding site. Residue glutamate 334 is part of the active site. Histidine 337 and histidine 343 together coordinate Zn(2+). Asparagine 351 and asparagine 371 each carry an N-linked (GlcNAc...) (complex) asparagine glycan. The Disintegrin domain maps to proline 401 to asparagine 487. Ca(2+) is bound by residues valine 403, asparagine 406, isoleucine 408, glutamate 410, glutamate 413, and aspartate 416. Disulfide bonds link cysteine 404-cysteine 433, cysteine 415-cysteine 428, cysteine 417-cysteine 423, cysteine 427-cysteine 450, cysteine 441-cysteine 447, cysteine 446-cysteine 472, cysteine 459-cysteine 479, cysteine 466-cysteine 498, cysteine 491-cysteine 503, cysteine 510-cysteine 560, cysteine 525-cysteine 571, cysteine 538-cysteine 548, cysteine 555-cysteine 597, and cysteine 591-cysteine 603. Residues glutamate 465 to aspartate 467 carry the D/ECD-tripeptide motif. Residues aspartate 467, valine 468, glutamate 470, aspartate 482, and glutamine 483 each contribute to the Ca(2+) site.

Belongs to the venom metalloproteinase (M12B) family. P-III subfamily. P-IIId sub-subfamily. As to quaternary structure, heterotrimer; disulfide-linked. The heterotrimer consists of 1 heavy chain and 2 light chains (lectins): LC1 and LC2. Zn(2+) serves as cofactor. In terms of processing, N-glycosylated; probably required for conformation. Removal of easily accessible sugars does not change its functional capacity, but removal of the core sugars with N-glycanase causes a virtually complete loss of enzyme activity, apparently as a result of major conformational changes in the molecule. Not O-glycosylated. In terms of tissue distribution, expressed by the venom gland.

The protein resides in the secreted. It catalyses the reaction Specifically activates several components of the blood clotting system, including coagulation factor X, coagulation factor IX and protein C by cleavage of Arg-|-Xaa bonds. Has no action on insulin B chain.. Catalytic subunit of blood coagulation factor X-activating enzyme. Activates coagulation factor X (F10) by cleaving the Arg-Ile bond and is also able to activate coagulation factor IX (F9) and protein S (PROS1) by specific cleavage of Arg-Ile and Arg-Val bonds. This is Coagulation factor X-activating enzyme heavy chain from Daboia siamensis (Eastern Russel's viper).